Consider the following 380-residue polypeptide: Crotonobetainyl-CoA reductase (380 aa).

This sequence belongs to the acyl-CoA dehydrogenase family. As to quaternary structure, homotetramer. It depends on FAD as a cofactor.

The protein resides in the cytoplasm. The enzyme catalyses 4-(trimethylamino)butanoyl-CoA + oxidized [electron-transfer flavoprotein] + H(+) = crotonobetainyl-CoA + reduced [electron-transfer flavoprotein]. Its pathway is amine and polyamine metabolism; carnitine metabolism. Functionally, catalyzes the reduction of crotonobetainyl-CoA to gamma-butyrobetainyl-CoA. The sequence is that of Crotonobetainyl-CoA reductase from Citrobacter koseri (strain ATCC BAA-895 / CDC 4225-83 / SGSC4696).